The primary structure comprises 797 residues: Plakophilin-3 (797 aa).

Residues 56-82 (QLGQQPRHNGAAEPEPEAETARGTSRG) form a disordered region. Position 81 is an omega-N-methylarginine (Arg-81). Ser-123, Ser-180, and Ser-183 each carry phosphoserine. Tyr-195 is modified (phosphotyrosine; by SRC). Phosphoserine is present on residues Ser-238 and Ser-240. Thr-250 is subject to Phosphothreonine. Arg-261 bears the Omega-N-methylarginine mark. Positions 283–288 (SLSLSL) are required for interaction with SFN. 4 positions are modified to phosphoserine: Ser-285, Ser-313, Ser-314, and Ser-331. Residues 294–724 (LPDVHGFNSY…AEVLVNIIAV (431 aa)) form a required for interaction with GSK3B region. ARM repeat units follow at residues 305-348 (SHRT…HKCY), 351-390 (AAAK…NLIY), 393-432 (ADNK…NLSS), 449-487 (TDLV…NLSS), 491-536 (ATRQ…NLSY), 596-637 (PKGL…NITA), 645-684 (VLSR…NLSR), and 689-730 (KDEM…NLVV). Residues 516–797 (AGKCEDKSVE…GYRKEDFLGP (282 aa)) are required for binding to PKP2 mRNA.

This sequence belongs to the beta-catenin family. In terms of assembly, found in a complex composed of CDH1, RAP1A and PKP3; PKP3 acts as a scaffold protein within the complex, the complex is required for CDH1 localization to mature desmosome cell junctions. Interacts with FXR1; the interaction facilitates the binding of PKP3 to PKP2 mRNA. Interacts (via ARM repeats) with GSK3B; the interaction may be involved in PKP3 protein degradation. Interacts with hyperphosphorylated and hypophosphorylated RB1; the interaction inhibits RB1 interaction with and repression of the transcription factor E2F1, potentially via sequestering RB1 to the cytoplasm. Interacts with CDKN1A; the interaction sequesters CDKN1A to the cytoplasm thereby repressing its role as an inhibitor of CDK4- and CDK6-driven RB1 phosphorylation. Interacts (via N-terminus) with SFN; the interaction maintains the cytoplasmic pool of PKP3, facilitates PKP3 exchange at desmosomes and restricts PKP3 localization to existing desmosome cell junctions. Interacts (via N-terminus) with JUP; the interaction is required for PKP3 localization to desmosome cell-cell junctions. In terms of processing, phosphorylated at Ser-285 when localized to the cytoplasm, PKP3 at desmosome cell junctions is not phosphorylated. Phosphorylation at Try-195 by SRC is induced by reactive oxygen species and potentially acts as a release mechanism from desmosome cell-cell junctions. Expressed in the epidermis of the skin, in squamous non-cornifying epithelial cells in the vagina, single layer epithelia of the duodenum and pancreas acini and non-epithelial dendritic reticulum cells of lymph node follicles (at protein level). In terms of tissue distribution, expressed in the oral cavity mucosa, epidermis and small intestine epithelium (at protein level). As to expression, expressed in the oral cavity mucosa and epithelial cells of the crypts and villi in the small intestine (at protein level). Expressed in the epidermis with more abundant expression found in the basal and low spinous cells (at protein level).

It localises to the nucleus. It is found in the cell junction. The protein localises to the desmosome. Its subcellular location is the cytoplasm. The protein resides in the cell membrane. It localises to the adherens junction. Its function is as follows. A component of desmosome cell-cell junctions which are required for positive regulation of cellular adhesion. Required for the localization of DSG2, DSP and PKP2 to mature desmosome junctions. May also play a role in the maintenance of DSG3 protein abundance in keratinocytes. Required for the formation of DSP-containing desmosome precursors in the cytoplasm during desmosome assembly. Also regulates the accumulation of CDH1 to mature desmosome junctions, via cAMP-dependent signaling and its interaction with activated RAP1A. Positively regulates the stabilization of PKP2 mRNA and therefore protein abundance, via its interaction with FXR1, may also regulate the protein abundance of DSP via the same mechanism. May also regulate the protein abundance of the desmosome component PKP1. Required for the organization of desmosome junctions at intercellular borders between basal keratinocytes of the epidermis, as a result plays a role in maintenance of the dermal barrier and regulation of the dermal inflammatory response. Required during epidermal keratinocyte differentiation for cell adherence at tricellular cell-cell contacts, via regulation of the timely formation of adherens junctions and desmosomes in a calcium-dependent manner, and may also play a role in the organization of the intracellular actin fiber belt. Acts as a negative regulator of the inflammatory response in hematopoietic cells of the skin and intestine, via modulation of proinflammatory cytokine production. Important for epithelial barrier maintenance in the intestine to reduce intestinal permeability, thereby plays a role in protection from intestinal-derived endotoxemia. Required for the development of hair follicles, via a role in the regulation of inner root sheaf length, correct alignment and anterior-posterior polarity of hair follicles. Promotes proliferation and cell-cycle G1/S phase transition of keratinocytes. Promotes E2F1-driven transcription of G1/S phase promoting genes by acting to release E2F1 from its inhibitory interaction with RB1, via sequestering RB1 and CDKN1A to the cytoplasm and thereby increasing CDK4- and CDK6-driven phosphorylation of RB1. May act as a scaffold protein to facilitate MAPK phosphorylation of RPS6KA protein family members and subsequently promote downstream EGFR signaling. May play a role in the positive regulation of transcription of Wnt-mediated TCF-responsive target genes. The chain is Plakophilin-3 (PKP3) from Homo sapiens (Human).